The primary structure comprises 554 residues: Glucose-6-phosphate isomerase (554 aa).

Glu358 serves as the catalytic Proton donor. Residues His389 and Lys515 contribute to the active site. Positions 527-540 (ANNSPAPQSDSSTD) are enriched in polar residues. Positions 527–554 (ANNSPAPQSDSSTDALVRRYRSERGRTS) are disordered. The span at 542 to 554 (LVRRYRSERGRTS) shows a compositional bias: basic and acidic residues.

Belongs to the GPI family.

The protein localises to the cytoplasm. It catalyses the reaction alpha-D-glucose 6-phosphate = beta-D-fructose 6-phosphate. Its pathway is carbohydrate biosynthesis; gluconeogenesis. The protein operates within carbohydrate degradation; glycolysis; D-glyceraldehyde 3-phosphate and glycerone phosphate from D-glucose: step 2/4. Catalyzes the reversible isomerization of glucose-6-phosphate to fructose-6-phosphate. The polypeptide is Glucose-6-phosphate isomerase (Mycolicibacterium paratuberculosis (strain ATCC BAA-968 / K-10) (Mycobacterium paratuberculosis)).